The primary structure comprises 403 residues: uncharacterized protein (403 aa).

Transmembrane regions (helical) follow at residues 29–49 (FVIF…CGFL) and 55–75 (AFIA…FFGC).

Belongs to the chlamydial CPn_0129/CT_036/TC_0306 family.

The protein resides in the cell membrane. This is an uncharacterized protein from Chlamydia trachomatis serovar D (strain ATCC VR-885 / DSM 19411 / UW-3/Cx).